The chain runs to 216 residues: Large ribosomal subunit protein uL1 (216 aa).

It belongs to the universal ribosomal protein uL1 family. Component of the large ribosomal subunit.

The protein localises to the cytoplasm. In terms of biological role, component of the large ribosomal subunit. The ribosome is a large ribonucleoprotein complex responsible for the synthesis of proteins in the cell. The polypeptide is Large ribosomal subunit protein uL1 (rpl10a) (Danio rerio (Zebrafish)).